The chain runs to 107 residues: Protein Asterix (107 aa).

Polar residues predominate over residues 1–15; that stretch reads MSHSHGNASSVNDPR. The tract at residues 1–25 is disordered; that stretch reads MSHSHGNASSVNDPRQPSAAKPYIP. Residues 82-98 form a helical membrane-spanning segment; the sequence is ISMAMMFAIMGLVTNYL.

It belongs to the Asterix family.

It is found in the membrane. The protein is Protein Asterix of Arabidopsis thaliana (Mouse-ear cress).